The primary structure comprises 442 residues: Pentatricopeptide repeat-containing protein At2g27800, mitochondrial (442 aa).

Residues M1–F67 constitute a mitochondrion transit peptide. 6 PPR repeats span residues N206 to S236, T244 to P286, D287 to P322, N323 to P357, N358 to V392, and D393 to D427.

The protein belongs to the PPR family. P subfamily.

The protein resides in the mitochondrion. This Arabidopsis thaliana (Mouse-ear cress) protein is Pentatricopeptide repeat-containing protein At2g27800, mitochondrial.